Here is a 380-residue protein sequence, read N- to C-terminus: DNA replication and repair protein RecF (380 aa).

30–37 (GQNGQGKT) is an ATP binding site.

Belongs to the RecF family.

The protein resides in the cytoplasm. Functionally, the RecF protein is involved in DNA metabolism; it is required for DNA replication and normal SOS inducibility. RecF binds preferentially to single-stranded, linear DNA. It also seems to bind ATP. This is DNA replication and repair protein RecF from Myxococcus xanthus (strain DK1622).